A 509-amino-acid polypeptide reads, in one-letter code: MAAIGVHLGCTSACVAVYKDGRAGVVANDAGDRVTPAVVAYSENEEIVGLAAKQSRIRNISNTVMKVKQILGRSSSDPQAQKYIAESKCLVIEKNGKLRYEIDTGEETKFVNPEDVARLIFSKMKETAHSVLGSDANDVVITVPFDFGEKQKNALGEAARAAGFNVLRLIHEPSAALLAYGIGQDSPTGKSNILVFKLGGTSLSLSVMEVNSGIYRVLSTNTDDNIGGAHFTETLAQYLASEFQRSFKHDVRGNARAMMKLTNSAEVAKHSLSTLGSANCFLDSLYEGQDFDCNVSRARFELLCSPLFNKCIEAIRGLLDQNGFTADDINKVVLCGGSSRIPKLQQLIKDLFPAVELLNSIPPDEVIPIGAAIEAGILIGKENLLVEDSLMIECSARDILVKGVDESGASRFTVLFPSGTPLPARRQHTLQAPGSISSVCLELYESDGKNSAKEETKFAQVVLQDLDKKENGLRDILAVLTMKRDGSLHVTCTDQETGKCEAISIEIAS.

Belongs to the heat shock protein 70 family. As to quaternary structure, component of ribosome-associated complex (RAC), a heterodimer composed of Hsp70/DnaK-type chaperone HSPA14 and Hsp40/DnaJ-type chaperone DNAJC2.

It localises to the cytoplasm. The protein localises to the cytosol. Component of the ribosome-associated complex (RAC), a complex involved in folding or maintaining nascent polypeptides in a folding-competent state. In the RAC complex, binds to the nascent polypeptide chain, while DNAJC2 stimulates its ATPase activity. This Homo sapiens (Human) protein is Heat shock 70 kDa protein 14 (HSPA14).